The sequence spans 245 residues: ATP synthase subunit a (245 aa).

The next 7 membrane-spanning stretches (helical) occupy residues L5 to V25, I37 to A57, Y99 to F119, F125 to L145, F157 to F177, L187 to F209, and S221 to A241.

It belongs to the ATPase A chain family. In terms of assembly, F-type ATPases have 2 components, CF(1) - the catalytic core - and CF(0) - the membrane proton channel. CF(1) has five subunits: alpha(3), beta(3), gamma(1), delta(1), epsilon(1). CF(0) has three main subunits: a(1), b(2) and c(9-12). The alpha and beta chains form an alternating ring which encloses part of the gamma chain. CF(1) is attached to CF(0) by a central stalk formed by the gamma and epsilon chains, while a peripheral stalk is formed by the delta and b chains.

The protein resides in the cell inner membrane. Key component of the proton channel; it plays a direct role in the translocation of protons across the membrane. The polypeptide is ATP synthase subunit a (Koribacter versatilis (strain Ellin345)).